The sequence spans 33 residues: Lysozyme C, spleen isozyme (33 aa).

The protein belongs to the glycosyl hydrolase 22 family. Monomer.

The enzyme catalyses Hydrolysis of (1-&gt;4)-beta-linkages between N-acetylmuramic acid and N-acetyl-D-glucosamine residues in a peptidoglycan and between N-acetyl-D-glucosamine residues in chitodextrins.. Lysozymes have primarily a bacteriolytic function; those in tissues and body fluids are associated with the monocyte-macrophage system and enhance the activity of immunoagents. The protein is Lysozyme C, spleen isozyme of Equus caballus (Horse).